Consider the following 596-residue polypeptide: M-phase inducer phosphatase (596 aa).

Phosphoserine occurs at positions 99 and 178. Residues 174–221 (LSSSSFDSYLRPNVSRSRSSGNAPPFLRSRSSSSYSINKKKGTSGGQA) are disordered. Residues 429–533 (IFDKCIIIDC…FYENHKNRCD (105 aa)) form the Rhodanese domain. Catalysis depends on Cys480, which acts as the Phosphocysteine intermediate.

The protein belongs to the MPI phosphatase family. Interacts with rad24 during G2 in a srk1-dependent manner; the interaction is increased during osmostress. In terms of processing, phosphorylated by srk1 in the N-terminus; phosphorylation promotes nuclear exclusion.

It localises to the cytoplasm. Its subcellular location is the nucleus. It catalyses the reaction O-phospho-L-tyrosyl-[protein] + H2O = L-tyrosyl-[protein] + phosphate. Functionally, tyrosine protein phosphatase which functions as a dosage-dependent inducer of mitotic and meiotic progression. Directly dephosphorylates cdc2 and stimulates its kinase activity. Required for the G2/M transition of the cell cycle. Required for induction of meiosis II. The chain is M-phase inducer phosphatase from Schizosaccharomyces pombe (strain 972 / ATCC 24843) (Fission yeast).